Consider the following 392-residue polypeptide: 8-amino-7-oxononanoate synthase (392 aa).

Position 21 (Arg21) interacts with substrate. Position 108–109 (108–109) interacts with pyridoxal 5'-phosphate; it reads GF. Residue His133 coordinates substrate. Residues Ser181, 206–209, and 237–240 contribute to the pyridoxal 5'-phosphate site; these read DDAH and TLSK. The residue at position 240 (Lys240) is an N6-(pyridoxal phosphate)lysine. A substrate-binding site is contributed by Thr354.

It belongs to the class-II pyridoxal-phosphate-dependent aminotransferase family. BioF subfamily. Homodimer. The cofactor is pyridoxal 5'-phosphate.

The catalysed reaction is 6-carboxyhexanoyl-[ACP] + L-alanine + H(+) = (8S)-8-amino-7-oxononanoate + holo-[ACP] + CO2. It participates in cofactor biosynthesis; biotin biosynthesis. Functionally, catalyzes the decarboxylative condensation of pimeloyl-[acyl-carrier protein] and L-alanine to produce 8-amino-7-oxononanoate (AON), [acyl-carrier protein], and carbon dioxide. This is 8-amino-7-oxononanoate synthase from Symbiobacterium thermophilum (strain DSM 24528 / JCM 14929 / IAM 14863 / T).